The primary structure comprises 483 residues: MANKDQNLTLWYDQLLSKAQLVSYGDVKGTNCFLPNSWNLWLQIQRLYNNATALIKLKDKVILKQFIPIEPLPYTVEQVQLPTLSFYSEYQKEKRHVEGFNPELFLIEQIGTKKLHDPLVLRPTSEIAFCNLWKKQSFSYQNLPVIYNQWTCVFRAEKNTRPFLRNSEFYWQETHGLFSDGVNSESAAIAFWKLYQDIIVNQLCIPAFVGLKSPNERFAGAQNTWTVESIMPDGQALQCATSHDLGQTFTKPFGLTFQNQANQQAIPYSFSCGISTRILGALLLTHSDDFGLVLPWKVAPIQVKLYLFDKKGDTKTVELAQKVQTLLEQLAIRFQFIKVENQLGKQLGQGEVNGIPFQLIVDNPQTVNIFNRLTRVKTAYSFEQLASRFVELVQQYHQAMYDKAKAVVQQKVVQATTLKQIEQAFNDKKAVLCAVRLTDTLEQQLKERYQVTVRCCLEQLQKPQICPFSGESAQDYVLIARAY.

It belongs to the class-II aminoacyl-tRNA synthetase family. ProS type 3 subfamily. Homodimer.

The protein localises to the cytoplasm. The enzyme catalyses tRNA(Pro) + L-proline + ATP = L-prolyl-tRNA(Pro) + AMP + diphosphate. In terms of biological role, catalyzes the attachment of proline to tRNA(Pro) in a two-step reaction: proline is first activated by ATP to form Pro-AMP and then transferred to the acceptor end of tRNA(Pro). This is Proline--tRNA ligase from Mycoplasma pneumoniae (strain ATCC 29342 / M129 / Subtype 1) (Mycoplasmoides pneumoniae).